The chain runs to 485 residues: D-alanine--D-alanyl carrier protein ligase (485 aa).

T144–S145 serves as a coordination point for ATP. D189 serves as a coordination point for D-alanine. N284 to T289 contributes to the ATP binding site. Position 293 (V293) interacts with D-alanine. Residues D365 and K473 each coordinate ATP. Residue K473 participates in D-alanine binding.

Belongs to the ATP-dependent AMP-binding enzyme family. DltA subfamily.

The protein resides in the cytoplasm. The catalysed reaction is holo-[D-alanyl-carrier protein] + D-alanine + ATP = D-alanyl-[D-alanyl-carrier protein] + AMP + diphosphate. It functions in the pathway cell wall biogenesis; lipoteichoic acid biosynthesis. Its function is as follows. Catalyzes the first step in the D-alanylation of lipoteichoic acid (LTA), the activation of D-alanine and its transfer onto the D-alanyl carrier protein (Dcp) DltC. In an ATP-dependent two-step reaction, forms a high energy D-alanyl-AMP intermediate, followed by transfer of the D-alanyl residue as a thiol ester to the phosphopantheinyl prosthetic group of the Dcp. D-alanylation of LTA plays an important role in modulating the properties of the cell wall in Gram-positive bacteria, influencing the net charge of the cell wall. This Staphylococcus aureus (strain Mu3 / ATCC 700698) protein is D-alanine--D-alanyl carrier protein ligase.